Reading from the N-terminus, the 191-residue chain is Peptidyl-tRNA hydrolase (191 aa).

Y17 is a binding site for tRNA. H22 (proton acceptor) is an active-site residue. The tRNA site is built by Y68, N70, and N116.

Belongs to the PTH family. In terms of assembly, monomer.

The protein resides in the cytoplasm. The enzyme catalyses an N-acyl-L-alpha-aminoacyl-tRNA + H2O = an N-acyl-L-amino acid + a tRNA + H(+). Hydrolyzes ribosome-free peptidyl-tRNAs (with 1 or more amino acids incorporated), which drop off the ribosome during protein synthesis, or as a result of ribosome stalling. Functionally, catalyzes the release of premature peptidyl moieties from peptidyl-tRNA molecules trapped in stalled 50S ribosomal subunits, and thus maintains levels of free tRNAs and 50S ribosomes. The sequence is that of Peptidyl-tRNA hydrolase from Francisella tularensis subsp. tularensis (strain FSC 198).